The chain runs to 223 residues: Phosphoribosylformylglycinamidine synthase subunit PurQ (223 aa).

Positions 3–223 (FAVLVFPGSN…MVKSWREQHV (221 aa)) constitute a Glutamine amidotransferase type-1 domain. Cysteine 85 (nucleophile) is an active-site residue. Active-site residues include histidine 193 and glutamate 195.

As to quaternary structure, part of the FGAM synthase complex composed of 1 PurL, 1 PurQ and 2 PurS subunits.

It localises to the cytoplasm. It carries out the reaction N(2)-formyl-N(1)-(5-phospho-beta-D-ribosyl)glycinamide + L-glutamine + ATP + H2O = 2-formamido-N(1)-(5-O-phospho-beta-D-ribosyl)acetamidine + L-glutamate + ADP + phosphate + H(+). It catalyses the reaction L-glutamine + H2O = L-glutamate + NH4(+). It participates in purine metabolism; IMP biosynthesis via de novo pathway; 5-amino-1-(5-phospho-D-ribosyl)imidazole from N(2)-formyl-N(1)-(5-phospho-D-ribosyl)glycinamide: step 1/2. Part of the phosphoribosylformylglycinamidine synthase complex involved in the purines biosynthetic pathway. Catalyzes the ATP-dependent conversion of formylglycinamide ribonucleotide (FGAR) and glutamine to yield formylglycinamidine ribonucleotide (FGAM) and glutamate. The FGAM synthase complex is composed of three subunits. PurQ produces an ammonia molecule by converting glutamine to glutamate. PurL transfers the ammonia molecule to FGAR to form FGAM in an ATP-dependent manner. PurS interacts with PurQ and PurL and is thought to assist in the transfer of the ammonia molecule from PurQ to PurL. In Staphylococcus aureus (strain Mu50 / ATCC 700699), this protein is Phosphoribosylformylglycinamidine synthase subunit PurQ.